A 500-amino-acid polypeptide reads, in one-letter code: Protein nucleotidyltransferase YdiU (500 aa).

Residues G98, G100, R101, K124, D136, G137, R187, and R194 each coordinate ATP. Residue D263 is the Proton acceptor of the active site. Residues N264 and D273 each contribute to the Mg(2+) site. An ATP-binding site is contributed by D273.

The protein belongs to the SELO family. It depends on Mg(2+) as a cofactor. Mn(2+) is required as a cofactor.

It carries out the reaction L-seryl-[protein] + ATP = 3-O-(5'-adenylyl)-L-seryl-[protein] + diphosphate. The catalysed reaction is L-threonyl-[protein] + ATP = 3-O-(5'-adenylyl)-L-threonyl-[protein] + diphosphate. The enzyme catalyses L-tyrosyl-[protein] + ATP = O-(5'-adenylyl)-L-tyrosyl-[protein] + diphosphate. It catalyses the reaction L-histidyl-[protein] + UTP = N(tele)-(5'-uridylyl)-L-histidyl-[protein] + diphosphate. It carries out the reaction L-seryl-[protein] + UTP = O-(5'-uridylyl)-L-seryl-[protein] + diphosphate. The catalysed reaction is L-tyrosyl-[protein] + UTP = O-(5'-uridylyl)-L-tyrosyl-[protein] + diphosphate. Its function is as follows. Nucleotidyltransferase involved in the post-translational modification of proteins. It can catalyze the addition of adenosine monophosphate (AMP) or uridine monophosphate (UMP) to a protein, resulting in modifications known as AMPylation and UMPylation. This is Protein nucleotidyltransferase YdiU from Herminiimonas arsenicoxydans.